The following is a 747-amino-acid chain: E3 UFM1-protein ligase 1 homolog (747 aa).

Residues 403-468 are disordered; the sequence is EKKKQCGSKA…GTVQVNSEEL (66 aa). A compositionally biased stretch (basic residues) spans 429 to 438; it reads GGKGGKKGGK. Over residues 439-449 the composition is skewed to gly residues; sequence GGKNGGGGGKG. Positions 450–465 are enriched in polar residues; that stretch reads ATSSVPTGSGTVQVNS.

It belongs to the UFL1 family.

Functionally, E3 UFM1-protein ligase that mediates ufmylation of target proteins. The polypeptide is E3 UFM1-protein ligase 1 homolog (ufl-1) (Caenorhabditis briggsae).